The primary structure comprises 260 residues: MVRMSKEWPEEGDLIVGTVHKVLGYGAFAKLEEYEGKEAFIHISEVSSGWVKNIRDYVRENQKIVARVLRVNPKKGHVDASLKRIREDQRTRRMQQWKIEQKAEKLLEISAKSINKTLDEAYDEVGYLIMEEFGDLYEGFELASDDGENVLLDVDVSPEWAKIITEVAKKNISTPEVQITGYVDLTSYKSNGVEIIIEALQSIESDNVEVQCVGSPTYRIMVTTEDYPTAEKILSEAANKCIGIVEENDGEGSFHRELED.

The S1 motif domain maps to 12-83 (GDLIVGTVHK…KKGHVDASLK (72 aa)).

This sequence belongs to the eIF-2-alpha family. Heterotrimer composed of an alpha, a beta and a gamma chain.

Functionally, eIF-2 functions in the early steps of protein synthesis by forming a ternary complex with GTP and initiator tRNA. The polypeptide is Translation initiation factor 2 subunit alpha (Methanosphaera stadtmanae (strain ATCC 43021 / DSM 3091 / JCM 11832 / MCB-3)).